The chain runs to 274 residues: Diaminopimelate epimerase (274 aa).

Positions 11, 44, and 64 each coordinate substrate. The active-site Proton donor is cysteine 73. Substrate is bound by residues 74–75 (GN), asparagine 157, asparagine 190, and 208–209 (ER). Cysteine 217 acts as the Proton acceptor in catalysis. Substrate is bound at residue 218 to 219 (GS).

This sequence belongs to the diaminopimelate epimerase family. As to quaternary structure, homodimer.

The protein localises to the cytoplasm. It carries out the reaction (2S,6S)-2,6-diaminopimelate = meso-2,6-diaminopimelate. It participates in amino-acid biosynthesis; L-lysine biosynthesis via DAP pathway; DL-2,6-diaminopimelate from LL-2,6-diaminopimelate: step 1/1. Its function is as follows. Catalyzes the stereoinversion of LL-2,6-diaminopimelate (L,L-DAP) to meso-diaminopimelate (meso-DAP), a precursor of L-lysine and an essential component of the bacterial peptidoglycan. The polypeptide is Diaminopimelate epimerase (Actinobacillus pleuropneumoniae serotype 7 (strain AP76)).